The chain runs to 182 residues: 7-carboxy-7-deazaguanine synthase (182 aa).

Substrate is bound by residues 12–14 and Arg27; that span reads LQG. In terms of domain architecture, Radical SAM core spans 18–182; the sequence is HTGTPAVFIR…LQTHKLIDIR (165 aa). [4Fe-4S] cluster contacts are provided by Cys31, Cys35, and Cys38. Mg(2+) is bound at residue Thr40. Position 68 (Thr68) interacts with substrate. Residues Gly70 and 111–113 each bind S-adenosyl-L-methionine; that span reads SPK.

Belongs to the radical SAM superfamily. 7-carboxy-7-deazaguanine synthase family. As to quaternary structure, homodimer. [4Fe-4S] cluster serves as cofactor. Requires S-adenosyl-L-methionine as cofactor. It depends on Mg(2+) as a cofactor.

The enzyme catalyses 6-carboxy-5,6,7,8-tetrahydropterin + H(+) = 7-carboxy-7-deazaguanine + NH4(+). The protein operates within purine metabolism; 7-cyano-7-deazaguanine biosynthesis. Functionally, catalyzes the complex heterocyclic radical-mediated conversion of 6-carboxy-5,6,7,8-tetrahydropterin (CPH4) to 7-carboxy-7-deazaguanine (CDG), a step common to the biosynthetic pathways of all 7-deazapurine-containing compounds. This Bacteroides thetaiotaomicron (strain ATCC 29148 / DSM 2079 / JCM 5827 / CCUG 10774 / NCTC 10582 / VPI-5482 / E50) protein is 7-carboxy-7-deazaguanine synthase.